A 142-amino-acid chain; its full sequence is Putative pre-16S rRNA nuclease (142 aa).

Belongs to the YqgF nuclease family.

Its subcellular location is the cytoplasm. Could be a nuclease involved in processing of the 5'-end of pre-16S rRNA. In Saccharophagus degradans (strain 2-40 / ATCC 43961 / DSM 17024), this protein is Putative pre-16S rRNA nuclease.